Consider the following 760-residue polypeptide: General transcription and DNA repair factor IIH helicase subunit XPD (760 aa).

The region spanning 7 to 283 (GLLVYFPYDY…KETDEQRLRD (277 aa)) is the Helicase ATP-binding domain. An ATP-binding site is contributed by 42–49 (MPSGTGKT). [4Fe-4S] cluster contacts are provided by cysteine 116, cysteine 134, cysteine 155, and cysteine 190. Positions 234–237 (DEAH) match the DEAH box motif. A mediates interaction with MMS19 region spans residues 438-637 (MDASLAIKPV…TQSRILKARL (200 aa)). A Nuclear localization signal motif is present at residues 682–695 (KRFARGDKRGKLPR).

It belongs to the helicase family. RAD3/XPD subfamily. As to quaternary structure, component of the 7-subunit TFIIH core complex composed of XPB/ERCC3, XPD/ERCC2, GTF2H1, GTF2H2, GTF2H3, GTF2H4 and GTF2H5, which is active in NER. The core complex associates with the 3-subunit CDK-activating kinase (CAK) module composed of CCNH/cyclin H, CDK7 and MNAT1 to form the 10-subunit holoenzyme (holo-TFIIH) active in transcription. Interacts with GTF2H2 (p44) which stimulates the 5'-3' helicase activity of this subunit. Component of the MMXD complex, which includes CIAO1, ERCC2, CIAO2B, MMS19 and SLC25A5. Interacts with CIAO1 and CIAO2B; the interaction WITH CIAO2B is direct. Interacts with ATF7IP. Interacts directly with MMS19. Part of TBP-based Pol II pre-initiation complex (PIC), in which Pol II core assembles with general transcription factors and other specific initiation factors including GTF2E1, GTF2E2, GTF2F1, GTF2F2, TCEA1, ERCC2, ERCC3, GTF2H2, GTF2H3, GTF2H4, GTF2H5, GTF2A1, GTF2A2, GTF2B and TBP; this large multi-subunit PIC complex mediates DNA unwinding and targets Pol II core to the transcription start site where the first phosphodiester bond forms. (Microbial infection) Interacts with Epstein-Barr virus EBNA2. Requires Mg(2+) as cofactor. [4Fe-4S] cluster serves as cofactor. In terms of processing, ISGylated.

The protein localises to the nucleus. Its subcellular location is the cytoplasm. The protein resides in the cytoskeleton. It localises to the spindle. The enzyme catalyses Couples ATP hydrolysis with the unwinding of duplex DNA at the replication fork by translocating in the 5'-3' direction. This creates two antiparallel DNA single strands (ssDNA). The leading ssDNA polymer is the template for DNA polymerase III holoenzyme which synthesizes a continuous strand.. It catalyses the reaction ATP + H2O = ADP + phosphate + H(+). Its activity is regulated as follows. Interaction with GTF2H2 (p44) results in stimulation of the 5'-3' helicase activity of this subunit. DNA unwinding by this subunit in TFIIH is stimulated 4-fold by XPA and 20-fold by ERCC5/XPG. Functionally, ATP-dependent 5'-3' DNA helicase. Component of the general transcription and DNA repair factor IIH (TFIIH) core complex, not absolutely essential for minimal transcription in vitro. Required for transcription-coupled nucleotide excision repair (NER) of damaged DNA; recognizes damaged bases. Sequestered in chromatin on UV-damaged DNA. When complexed to CDK-activating kinase (CAK), involved in transcription by RNA polymerase II. In NER, TFIIH acts by opening DNA around the lesion to allow the excision of the damaged oligonucleotide and its replacement by a new DNA fragment. The ATP-dependent helicase activity of XPD/ERCC2 is required for DNA opening. Involved in DNA lesion verification. In transcription, TFIIH has an essential role in transcription initiation. When the pre-initiation complex (PIC) has been established, TFIIH is required for promoter opening and promoter escape. Phosphorylation of the C-terminal tail (CTD) of the largest subunit of RNA polymerase II by the kinase module CAK controls the initiation of transcription. XPD/ERCC2 acts by forming a bridge between CAK and the core-TFIIH complex. The structure of the TFIIH transcription complex differs from the NER-TFIIH complex; large movements by XPD/ERCC2 and XPB/ERCC3 are stabilized by XPA which allow this subunit to contact ssDNA. Involved in the regulation of vitamin-D receptor activity. As part of the mitotic spindle-associated MMXD complex it plays a role in chromosome segregation. Might have a role in aging process and could play a causative role in the generation of skin cancers. The polypeptide is General transcription and DNA repair factor IIH helicase subunit XPD (ERCC2) (Homo sapiens (Human)).